The chain runs to 279 residues: Odontogenic ameloblast-associated protein (279 aa).

The N-terminal stretch at 1 to 15 (MKIIILLGFLGATLS) is a signal peptide. Residues 100-123 (AQGAQAGQVDPSQAQTPPQTQPGP) show a composition bias toward low complexity. A disordered region spans residues 100–125 (AQGAQAGQVDPSQAQTPPQTQPGPNH). O-linked (GalNAc...) threonine glycans are attached at residues threonine 115 and threonine 119. Positions 127–129 (MPY) are interaction with ARHGEF5. Threonine 168, threonine 244, threonine 250, threonine 251, threonine 255, and threonine 273 each carry an O-linked (GalNAc...) threonine glycan.

The protein belongs to the ODAM family. In terms of assembly, interacts (via C-terminus) with ARHGEF5. In terms of processing, O-glycosylated.

The protein localises to the secreted. It localises to the cytoplasm. Its subcellular location is the nucleus. In terms of biological role, tooth-associated epithelia protein that probably plays a role in odontogenesis, the complex process that results in the initiation and generation of the tooth. May be incorporated in the enamel matrix at the end of mineralization process. Involved in the induction of RHOA activity via interaction with ARHGEF and expression of downstream factors such as ROCK. Plays a role in attachment of the junctional epithelium to the tooth surface. In Macaca mulatta (Rhesus macaque), this protein is Odontogenic ameloblast-associated protein (ODAM).